We begin with the raw amino-acid sequence, 182 residues long: UPF0397 protein BCE_2667 (182 aa).

The next 5 membrane-spanning stretches (helical) occupy residues 9–29 (VVAI…GFSI), 40–60 (AILT…IGLI), 71–91 (WGIW…MGLI), 114–134 (ITGL…DIIV), and 142–162 (IVIQ…VLGL).

Belongs to the UPF0397 family.

It is found in the cell membrane. In Bacillus cereus (strain ATCC 10987 / NRS 248), this protein is UPF0397 protein BCE_2667.